Here is a 388-residue protein sequence, read N- to C-terminus: 1-deoxy-D-xylulose 5-phosphate reductoisomerase (388 aa).

Residues Thr-15, Gly-16, Ser-17, Ile-18, and Asn-127 each contribute to the NADPH site. A 1-deoxy-D-xylulose 5-phosphate-binding site is contributed by Lys-128. Glu-129 is an NADPH binding site. A Mn(2+)-binding site is contributed by Asp-153. 4 residues coordinate 1-deoxy-D-xylulose 5-phosphate: Ser-154, Glu-155, Ser-179, and His-202. Residue Glu-155 coordinates Mn(2+). Gly-208 provides a ligand contact to NADPH. Ser-215, Asn-220, Lys-221, and Glu-224 together coordinate 1-deoxy-D-xylulose 5-phosphate. Glu-224 contributes to the Mn(2+) binding site.

Belongs to the DXR family. Requires Mg(2+) as cofactor. It depends on Mn(2+) as a cofactor.

It carries out the reaction 2-C-methyl-D-erythritol 4-phosphate + NADP(+) = 1-deoxy-D-xylulose 5-phosphate + NADPH + H(+). It participates in isoprenoid biosynthesis; isopentenyl diphosphate biosynthesis via DXP pathway; isopentenyl diphosphate from 1-deoxy-D-xylulose 5-phosphate: step 1/6. Functionally, catalyzes the NADPH-dependent rearrangement and reduction of 1-deoxy-D-xylulose-5-phosphate (DXP) to 2-C-methyl-D-erythritol 4-phosphate (MEP). This is 1-deoxy-D-xylulose 5-phosphate reductoisomerase from Bacteroides fragilis (strain YCH46).